The chain runs to 252 residues: Putative pinene synthase (252 aa).

It belongs to the terpene synthase family. Tpsa subfamily.

This chain is Putative pinene synthase, found in Fragaria ananassa (Strawberry).